Here is a 338-residue protein sequence, read N- to C-terminus: Protein pelota homolog (338 aa).

The protein belongs to the eukaryotic release factor 1 family. Pelota subfamily. In terms of assembly, monomer. Requires a divalent metal cation as cofactor.

The protein localises to the cytoplasm. May function in recognizing stalled ribosomes, interact with stem-loop structures in stalled mRNA molecules, and effect endonucleolytic cleavage of the mRNA. May play a role in the release non-functional ribosomes and degradation of damaged mRNAs. Has endoribonuclease activity. In Caldivirga maquilingensis (strain ATCC 700844 / DSM 13496 / JCM 10307 / IC-167), this protein is Protein pelota homolog.